A 326-amino-acid chain; its full sequence is DNA-directed RNA polymerase subunit alpha (326 aa).

Residues 1-231 (MQTNLLKPKI…DQLVVFAALE (231 aa)) form an alpha N-terminal domain (alpha-NTD) region. An alpha C-terminal domain (alpha-CTD) region spans residues 247–326 (VDPMLMRPVD…ESWPPANLEK (80 aa)).

This sequence belongs to the RNA polymerase alpha chain family. Homodimer. The RNAP catalytic core consists of 2 alpha, 1 beta, 1 beta' and 1 omega subunit. When a sigma factor is associated with the core the holoenzyme is formed, which can initiate transcription.

The catalysed reaction is RNA(n) + a ribonucleoside 5'-triphosphate = RNA(n+1) + diphosphate. Functionally, DNA-dependent RNA polymerase catalyzes the transcription of DNA into RNA using the four ribonucleoside triphosphates as substrates. This chain is DNA-directed RNA polymerase subunit alpha, found in Polynucleobacter asymbioticus (strain DSM 18221 / CIP 109841 / QLW-P1DMWA-1) (Polynucleobacter necessarius subsp. asymbioticus).